The primary structure comprises 375 residues: Serpentine receptor class alpha-39 (375 aa).

A run of 7 helical transmembrane segments spans residues 17–37 (LFAI…LFII), 51–71 (LVFL…LTAW), 99–119 (IRGT…GILL), 138–158 (LGTI…FILL), 183–203 (VYVM…VHLV), 236–256 (TPLL…VSVF), and 275–295 (LFIM…ELWL).

It belongs to the nematode receptor-like protein sra family.

The protein localises to the membrane. This is Serpentine receptor class alpha-39 (sra-39) from Caenorhabditis elegans.